The primary structure comprises 581 residues: DEAD-box ATP-dependent RNA helicase 22 (581 aa).

The short motif at 80–108 (VSWKSLGLSDNVSIALRDSGFDRPSLTQA) is the Q motif element. The region spanning 111 to 380 (IPSILSGKDV…GGILKHMFQD (270 aa)) is the Helicase ATP-binding domain. 124–131 (AETGSGKT) provides a ligand contact to ATP. The DEAD box signature appears at 244–247 (DEAD). Residues 408-566 (QVDALIEAVK…GFRNKVKKRA (159 aa)) enclose the Helicase C-terminal domain.

This sequence belongs to the DEAD box helicase family.

The enzyme catalyses ATP + H2O = ADP + phosphate + H(+). In Arabidopsis thaliana (Mouse-ear cress), this protein is DEAD-box ATP-dependent RNA helicase 22 (RH22).